Here is a 282-residue protein sequence, read N- to C-terminus: MMPGAPSPSAPSIALNDENTMPVLGMGVAGLSDDETERAVSAALEIGCRLIDTAAAYGNEAAVGRALAASGIPRAELFVTTKVATADHGFTASREACKASLDRLGLDYVDLYLIHWPAPAVGKYVDAFGGLIQARGEGFTRSIGVSNFTEEHVSNVIDLTFVTPAVNQVELHPLLNQDELRKANAQHNVVTQSYTPLALGQLADNPTVTSIAGEYGKTPTQVLLRWNLQLGNAVIFGSSNAEHIVTNLDVFEFELASQHMDAINGLNDGTRLREDPMTFAGV.

Catalysis depends on tyrosine 57, which acts as the Proton donor. NADPH is bound by residues leucine 197, isoleucine 235, serine 238, threonine 246, asparagine 247, and arginine 273.

This sequence belongs to the aldo/keto reductase family.

The sequence is that of Aldo-keto reductase MUL_1987 from Mycobacterium ulcerans (strain Agy99).